A 270-amino-acid polypeptide reads, in one-letter code: 3-methyl-2-oxobutanoate hydroxymethyltransferase (270 aa).

Residues D50 and D89 each coordinate Mg(2+). Residues 50-51, D89, and K118 each bind 3-methyl-2-oxobutanoate; that span reads DS. E120 contributes to the Mg(2+) binding site. The active-site Proton acceptor is E187.

This sequence belongs to the PanB family. As to quaternary structure, homodecamer; pentamer of dimers. Mg(2+) serves as cofactor.

The protein localises to the cytoplasm. It catalyses the reaction 3-methyl-2-oxobutanoate + (6R)-5,10-methylene-5,6,7,8-tetrahydrofolate + H2O = 2-dehydropantoate + (6S)-5,6,7,8-tetrahydrofolate. It functions in the pathway cofactor biosynthesis; (R)-pantothenate biosynthesis; (R)-pantoate from 3-methyl-2-oxobutanoate: step 1/2. Functionally, catalyzes the reversible reaction in which hydroxymethyl group from 5,10-methylenetetrahydrofolate is transferred onto alpha-ketoisovalerate to form ketopantoate. In Helicobacter pylori (strain P12), this protein is 3-methyl-2-oxobutanoate hydroxymethyltransferase.